Here is a 102-residue protein sequence, read N- to C-terminus: uncharacterized protein (102 aa).

Positions 1–19 are cleaved as a signal peptide; the sequence is MFLFCFVLFCSLVFPLARG.

This is an uncharacterized protein from Saccharomyces cerevisiae (strain ATCC 204508 / S288c) (Baker's yeast).